Reading from the N-terminus, the 129-residue chain is NADH-quinone oxidoreductase subunit A (129 aa).

A run of 3 helical transmembrane segments spans residues 14-34 (LAIHVALSAGIVAAIIGVAAV), 67-87 (FLIAALFVIFDMEAAILFAWA), and 97-117 (GLIEAAIFIGVLLLALVYLWI).

Belongs to the complex I subunit 3 family. In terms of assembly, NDH-1 is composed of 14 different subunits. Subunits NuoA, H, J, K, L, M, N constitute the membrane sector of the complex.

The protein localises to the cell inner membrane. It carries out the reaction a quinone + NADH + 5 H(+)(in) = a quinol + NAD(+) + 4 H(+)(out). Its function is as follows. NDH-1 shuttles electrons from NADH, via FMN and iron-sulfur (Fe-S) centers, to quinones in the respiratory chain. The immediate electron acceptor for the enzyme in this species is believed to be ubiquinone. Couples the redox reaction to proton translocation (for every two electrons transferred, four hydrogen ions are translocated across the cytoplasmic membrane), and thus conserves the redox energy in a proton gradient. The protein is NADH-quinone oxidoreductase subunit A of Rhodopseudomonas palustris (strain BisB18).